A 252-amino-acid chain; its full sequence is tRNA pseudouridine synthase A (252 aa).

Catalysis depends on Asp-52, which acts as the Nucleophile. Tyr-111 serves as a coordination point for substrate.

The protein belongs to the tRNA pseudouridine synthase TruA family. In terms of assembly, homodimer.

It catalyses the reaction uridine(38/39/40) in tRNA = pseudouridine(38/39/40) in tRNA. Functionally, formation of pseudouridine at positions 38, 39 and 40 in the anticodon stem and loop of transfer RNAs. This is tRNA pseudouridine synthase A from Parabacteroides distasonis (strain ATCC 8503 / DSM 20701 / CIP 104284 / JCM 5825 / NCTC 11152).